Here is a 74-residue protein sequence, read N- to C-terminus: Fulgimotoxin (74 aa).

Glutamine 1 is modified (pyrrolidone carboxylic acid). 5 disulfide bridges follow: cysteine 10/cysteine 34, cysteine 13/cysteine 21, cysteine 27/cysteine 51, cysteine 55/cysteine 66, and cysteine 67/cysteine 72.

Belongs to the three-finger toxin family. Ancestral subfamily. Boigatoxin sub-subfamily. As to quaternary structure, monomer. Post-translationally, the N-terminus is blocked. Contains 5 disulfide bonds. In terms of tissue distribution, expressed by the venom gland.

The protein localises to the secreted. In terms of biological role, reptile-specific three-finger toxin that is lethal at low doses for lizards, but not for mice. Probably acts as a neurotoxin. This chain is Fulgimotoxin, found in Oxybelis fulgidus (Green vine snake).